Consider the following 470-residue polypeptide: Syncoilin (470 aa).

Residues 1 to 43 (MASPEPLRGGDGARASREPHTEASFPLQESESPKEAKTFNPEA) form a disordered region. Residues 1–148 (MASPEPLRGG…TEGSLPAQPI (148 aa)) are head. Residue S32 is modified to Phosphoserine. The region spanning 157-452 (SVEDLERLEA…AMLPKSLEQA (296 aa)) is the IF rod domain. Positions 158–192 (VEDLERLEARFQQCVQAVSQLEEERDQLIHELVLL) are coil 1A. The linker 1 stretch occupies residues 193–219 (REPALQEVQQVHQDILAAYKLHAQAEL). The interval 220 to 297 (ERDGLREEIR…KEQLQQQLEA (78 aa)) is coil 1b. The segment at 298 to 337 (PPTQSDGHFLQESRRLSTQFENLMAESRQGLEEEYEPQLL) is linker 2. S314 is modified (phosphoserine). The segment at 338–445 (RLLERKEAGT…EELSTYKAML (108 aa)) is coil 2. A disordered region spans residues 446–470 (PKSLEQADAPTSQAGGVEAQSPGTV). Positions 446-470 (PKSLEQADAPTSQAGGVEAQSPGTV) are tail.

It belongs to the intermediate filament family. As to quaternary structure, may link the dystrophin-associated glycoprotein complex (DAPC) to intracellular desmin (DES) filaments. Interacts with DES and DTNA. In terms of tissue distribution, detected strongly in skeletal muscle and heart and weakly in lung (at protein level). Highly expressed in skeletal muscle and lung and weakly in lung and testis.

The protein resides in the cytoplasm. It localises to the perinuclear region. Its function is as follows. Atypical type III intermediate filament (IF) protein that may play a supportive role in the efficient coupling of mechanical stress between the myofibril and fiber exterior. May facilitate lateral force transmission during skeletal muscle contraction. Does not form homofilaments nor heterofilaments with other IF proteins. The protein is Syncoilin (Sync) of Mus musculus (Mouse).